Reading from the N-terminus, the 1129-residue chain is Ubiquitin carboxyl-terminal hydrolase 15 (1129 aa).

The interval 1–26 (MVLSNVDAEEVNMDSSMELEESSQEP) is disordered. Positions 7–23 (DAEEVNMDSSMELEESS) are enriched in acidic residues. An MATH domain is found at 51 to 204 (HASYSWVVKN…NDEICISVTV (154 aa)). The 316-residue stretch at 230-545 (VGLKNQGATC…NAYMLVYFRK (316 aa)) folds into the USP domain. Cys-239 serves as the catalytic Nucleophile. The Proton acceptor role is filled by His-481.

The protein belongs to the peptidase C19 family.

It localises to the nucleus. The catalysed reaction is Thiol-dependent hydrolysis of ester, thioester, amide, peptide and isopeptide bonds formed by the C-terminal Gly of ubiquitin (a 76-residue protein attached to proteins as an intracellular targeting signal).. Its function is as follows. Hydrolase that deubiquitinates target proteins. Cleaves the UBL propeptide in sde2. Involved in regulating the steady-state levels of proteins including prp4. This is Ubiquitin carboxyl-terminal hydrolase 15 from Schizosaccharomyces pombe (strain 972 / ATCC 24843) (Fission yeast).